A 398-amino-acid chain; its full sequence is Transcription termination factor 1, mitochondrial (398 aa).

Residues 1-57 (MQSLSLGQTSISKGLNYLTIMAPGNLWHMRNNFLFGSRCWMTRFSAENIFKSVSFRL) constitute a mitochondrion transit peptide. Interaction with DNA regions lie at residues 169 to 170 (RS), 246 to 250 (QSTKR), 323 to 330 (AEKKFNDK), 354 to 357 (SIST), and 383 to 390 (SKKRYEAK).

The protein belongs to the mTERF family. Monomer. Phosphoprotein with mostly four phosphate groups. While the DNA-binding activity is unaffected by the phosphorylation state, only the phosphorylated form of the protein is active for termination activity. Functioning seems to be regulated by phosphorylation.

It is found in the mitochondrion. Its function is as follows. Transcription termination factor. Binds to a 28 bp region within the tRNA(Leu(uur)) gene at a position immediately adjacent to and downstream of the 16S rRNA gene; this region comprises a tridecamer sequence critical for directing accurate termination. Binds DNA along the major grove and promotes DNA bending and partial unwinding. Promotes base flipping. Transcription termination activity appears to be polarized with highest specificity for transcripts initiated on the light strand. The chain is Transcription termination factor 1, mitochondrial (MTERF1) from Pongo abelii (Sumatran orangutan).